The primary structure comprises 412 residues: Putative competence-damage inducible protein (412 aa).

The protein belongs to the CinA family.

This is Putative competence-damage inducible protein from Bacillus cereus (strain ZK / E33L).